The chain runs to 309 residues: Shugoshin (309 aa).

Residues 42–77 (NLLLKQQVVQCTKTIEKLRNENVALRQKNQELIDGT) adopt a coiled-coil conformation. 2 disordered regions span residues 165 to 195 (FDNN…KGRR) and 210 to 309 (EEAS…NTFF). Residues 167–178 (NNSSQSTSSIQN) show a composition bias toward low complexity. Basic residues predominate over residues 184-193 (PRKKQSVGKG).

This sequence belongs to the shugoshin family. In terms of tissue distribution, expressed in gonads.

The protein resides in the nucleus. It localises to the chromosome. The protein localises to the centromere. Functionally, component of cell cycle checkpoints, which ensures chromosome segregation during meiosis and mitosis. During meiotic prophase, it is involved in the regulation of the synapsis checkpoint, which monitors whether homologous chromosomes have synapsed, and the DNA damage response. Plays a central role in chromosome cohesion during cell division by preventing premature dissociation of cohesin complex after prophase, when most of cohesin complex dissociates from chromosomes arms. The protein is Shugoshin of Caenorhabditis elegans.